We begin with the raw amino-acid sequence, 356 residues long: Mitogen-activated protein kinase PMK1 (356 aa).

One can recognise a Protein kinase domain in the interval 24–312; sequence YDIQDVVGEG…VEEALKHPYL (289 aa). ATP contacts are provided by residues 30 to 38 and lysine 53; that span reads VGEGAYGVV.

It belongs to the protein kinase superfamily. CMGC Ser/Thr protein kinase family. MAP kinase subfamily. Mg(2+) is required as a cofactor. Post-translationally, phosphorylated by MST7.

The catalysed reaction is L-seryl-[protein] + ATP = O-phospho-L-seryl-[protein] + ADP + H(+). The enzyme catalyses L-threonyl-[protein] + ATP = O-phospho-L-threonyl-[protein] + ADP + H(+). Functionally, mitogen-activated protein kinase; part of the MST11-MST7-PMK1 MAP kinase (MAPK) cascade that is essential for appressorium formation, penetration and invasive growth. Central regulator of appressorium development that acts downstream of the cAMP signal. The MST11-MST7-PMK1 MAP kinase cascade transduces signals from the cell surface sensors MDB2 and SHO1 that recognize various surface signals such as surface hydrophobicity, cutin monomers, and rice leaf waxes. Regulates expression of secreted fungal effector proteins implicated of host immune defenses, preventing reactive oxygen species generation and excessive callose deposition at plasmodesmata. Furthermore, controls the hyphal constriction required for fungal growth from one rice cell to the neighboring cell, enabling host tissue colonization and blast disease. Targets downstream of the PMK1-MAPK pathway include transcription factor MST12 and pathogenicity-related genes GAS1 and GAS2, both of which are expressed during appressorium formation, even if regulation of MST12 is not associated with expression of GAS1 or GAS2. In Pyricularia oryzae (Rice blast fungus), this protein is Mitogen-activated protein kinase PMK1.